A 218-amino-acid chain; its full sequence is E3 ubiquitin-protein ligase MARCHF3 (218 aa).

The segment at 63-123 adopts an RING-CH-type zinc-finger fold; it reads SPFNDRPMCR…ELCHFRFAVE (61 aa). 8 residues coordinate Zn(2+): Cys-71, Cys-74, Cys-87, Cys-89, His-97, Cys-100, Cys-113, and Cys-116. Transmembrane regions (helical) follow at residues 145 to 165 and 180 to 200; these read LFGD…SGWL and LEAV…LFWT.

Interacts with MARCHF2 and STX6.

The protein resides in the cytoplasmic vesicle membrane. The protein localises to the early endosome membrane. It carries out the reaction S-ubiquitinyl-[E2 ubiquitin-conjugating enzyme]-L-cysteine + [acceptor protein]-L-lysine = [E2 ubiquitin-conjugating enzyme]-L-cysteine + N(6)-ubiquitinyl-[acceptor protein]-L-lysine.. Its pathway is protein modification; protein ubiquitination. In terms of biological role, E3 ubiquitin-protein ligase which may be involved in endosomal trafficking. E3 ubiquitin ligases accept ubiquitin from an E2 ubiquitin-conjugating enzyme in the form of a thioester and then directly transfer the ubiquitin to targeted substrates. This Mus musculus (Mouse) protein is E3 ubiquitin-protein ligase MARCHF3 (Marchf3).